Reading from the N-terminus, the 125-residue chain is Small ribosomal subunit protein uS12 (125 aa).

The disordered stretch occupies residues methionine 1–alanine 23. Aspartate 89 is modified (3-methylthioaspartic acid). Residues alanine 102 to lysine 125 form a disordered region. A compositionally biased stretch (basic residues) spans arginine 111 to lysine 125.

The protein belongs to the universal ribosomal protein uS12 family. As to quaternary structure, part of the 30S ribosomal subunit. Contacts proteins S8 and S17. May interact with IF1 in the 30S initiation complex.

With S4 and S5 plays an important role in translational accuracy. Functionally, interacts with and stabilizes bases of the 16S rRNA that are involved in tRNA selection in the A site and with the mRNA backbone. Located at the interface of the 30S and 50S subunits, it traverses the body of the 30S subunit contacting proteins on the other side and probably holding the rRNA structure together. The combined cluster of proteins S8, S12 and S17 appears to hold together the shoulder and platform of the 30S subunit. The chain is Small ribosomal subunit protein uS12 from Halorhodospira halophila (strain DSM 244 / SL1) (Ectothiorhodospira halophila (strain DSM 244 / SL1)).